We begin with the raw amino-acid sequence, 426 residues long: D-amino acid dehydrogenase (426 aa).

Val3–Trp17 is an FAD binding site.

The protein belongs to the DadA oxidoreductase family. Requires FAD as cofactor.

It catalyses the reaction a D-alpha-amino acid + A + H2O = a 2-oxocarboxylate + AH2 + NH4(+). The protein operates within amino-acid degradation; D-alanine degradation; NH(3) and pyruvate from D-alanine: step 1/1. Oxidative deamination of D-amino acids. The chain is D-amino acid dehydrogenase from Phenylobacterium zucineum (strain HLK1).